A 235-amino-acid polypeptide reads, in one-letter code: Uridylate kinase (235 aa).

An ATP-binding site is contributed by 9–12; it reads KLSG. UMP is bound at residue Gly-51. The ATP site is built by Gly-52 and Arg-56. Residues Asp-71 and 133 to 140 contribute to the UMP site; that span reads SGNPFFTT. Residues Thr-160, Tyr-166, and Asp-169 each coordinate ATP.

It belongs to the UMP kinase family. Homohexamer.

The protein resides in the cytoplasm. It catalyses the reaction UMP + ATP = UDP + ADP. It functions in the pathway pyrimidine metabolism; CTP biosynthesis via de novo pathway; UDP from UMP (UMPK route): step 1/1. Its activity is regulated as follows. Inhibited by UTP. Its function is as follows. Catalyzes the reversible phosphorylation of UMP to UDP. The chain is Uridylate kinase from Gloeobacter violaceus (strain ATCC 29082 / PCC 7421).